The following is a 114-amino-acid chain: Iron-sulfur cluster insertion protein ErpA (114 aa).

Residues Cys42, Cys106, and Cys108 each contribute to the iron-sulfur cluster site.

This sequence belongs to the HesB/IscA family. Homodimer. Requires iron-sulfur cluster as cofactor.

Its function is as follows. Required for insertion of 4Fe-4S clusters for at least IspG. The protein is Iron-sulfur cluster insertion protein ErpA of Yersinia pseudotuberculosis serotype O:1b (strain IP 31758).